Here is a 166-residue protein sequence, read N- to C-terminus: Endoribonuclease YbeY (166 aa).

The Zn(2+) site is built by His-136, His-140, and His-146.

Belongs to the endoribonuclease YbeY family. Zn(2+) is required as a cofactor.

It localises to the cytoplasm. Its function is as follows. Single strand-specific metallo-endoribonuclease involved in late-stage 70S ribosome quality control and in maturation of the 3' terminus of the 16S rRNA. This is Endoribonuclease YbeY from Synechococcus sp. (strain CC9605).